A 407-amino-acid polypeptide reads, in one-letter code: RNA-binding motif, single-stranded-interacting protein 2 (407 aa).

M1 is modified (N-acetylmethionine). The segment at 14 to 51 (FGYNKNNKKPYVSLSQQMAPPSPSSSTPNSSSGSTAHD) is disordered. Residues 37 to 47 (SSSTPNSSSGS) show a composition bias toward low complexity. RRM domains follow at residues 56-129 (TNLY…MAKQ) and 135-220 (TNLY…FADG). S106 carries the phosphoserine modification. Residues S280 and S285 each carry the phosphoserine modification. Low complexity predominate over residues 374–392 (PSSSVSVEESGSQQSQVPV). Residues 374–398 (PSSSVSVEESGSQQSQVPVDAPSEH) form a disordered region.

It localises to the nucleus. This is RNA-binding motif, single-stranded-interacting protein 2 (RBMS2) from Bos taurus (Bovine).